The sequence spans 104 residues: Large ribosomal subunit protein uL24 (104 aa).

The protein belongs to the universal ribosomal protein uL24 family. As to quaternary structure, part of the 50S ribosomal subunit.

Its function is as follows. One of two assembly initiator proteins, it binds directly to the 5'-end of the 23S rRNA, where it nucleates assembly of the 50S subunit. In terms of biological role, one of the proteins that surrounds the polypeptide exit tunnel on the outside of the subunit. In Anaplasma phagocytophilum (strain HZ), this protein is Large ribosomal subunit protein uL24.